A 544-amino-acid chain; its full sequence is Cytochrome P450 2U1 (544 aa).

4 helical membrane passes run 30 to 50 (LDPSGGALLLCGLVALLGWSW), 113 to 133 (VYGSIFSFFIGHYLVVVLSDF), 261 to 281 (ICLNSQVLLVNICPWLYYLPF), and 342 to 362 (LFYIIGDLFIAGTDTTTNSLL). Cys490 contacts heme. A helical membrane pass occupies residues 495–515 (LAKMELFLMFVSLMQSFAFAL).

It belongs to the cytochrome P450 family. It depends on heme as a cofactor. As to expression, widely expressed with stronger expression in thymus, heart and cerebellum.

It localises to the endoplasmic reticulum membrane. Its subcellular location is the microsome membrane. It is found in the mitochondrion inner membrane. The enzyme catalyses an omega-methyl-long-chain fatty acid + reduced [NADPH--hemoprotein reductase] + O2 = an omega-hydroxy-long-chain fatty acid + oxidized [NADPH--hemoprotein reductase] + H2O + H(+). The catalysed reaction is (5Z,8Z,11Z,14Z)-eicosatetraenoate + reduced [NADPH--hemoprotein reductase] + O2 = 19-hydroxy-(5Z,8Z,11Z,14Z)-eicosatetraenoate + oxidized [NADPH--hemoprotein reductase] + H2O + H(+). It carries out the reaction (5Z,8Z,11Z,14Z)-eicosatetraenoate + reduced [NADPH--hemoprotein reductase] + O2 = 20-hydroxy-(5Z,8Z,11Z,14Z)-eicosatetraenoate + oxidized [NADPH--hemoprotein reductase] + H2O + H(+). It catalyses the reaction N-[(5Z,8Z,11Z,14Z)-eicosatetraenoyl]-serotonin + reduced [NADPH--hemoprotein reductase] + O2 = 2-oxo-N-[(5Z,8Z,11Z,14Z)-eicosatetraenoyl]-serotonin + oxidized [NADPH--hemoprotein reductase] + H2O + H(+). It participates in lipid metabolism; arachidonate metabolism. Functionally, a cytochrome P450 monooxygenase involved in the metabolism of arachidonic acid and its conjugates. Mechanistically, uses molecular oxygen inserting one oxygen atom into a substrate, and reducing the second into a water molecule, with two electrons provided by NADPH via cytochrome P450 reductase (CPR; NADPH-ferrihemoprotein reductase). Acts as an omega and omega-1 hydroxylase for arachidonic acid and possibly for other long chain fatty acids. May modulate the arachidonic acid signaling pathway and play a role in other fatty acid signaling processes. May down-regulate the biological activities of N-arachidonoyl-serotonin, an endocannabinoid that has anti-nociceptive effects through inhibition of fatty acid amide hydrolase FAAH, TRPV1 receptor and T-type calcium channels. Catalyzes C-2 oxidation of the indole ring of N-arachidonoyl-serotonin forming a less active product 2-oxo-N-arachidonoyl-serotonin. The sequence is that of Cytochrome P450 2U1 from Homo sapiens (Human).